The sequence spans 165 residues: Cysteine-rich hydrophobic domain-containing protein 2 (165 aa).

Positions Met-1 to Ser-26 form a coiled coil. The CHIC motif (Cys-rich) motif lies at Cys-88 to Cys-106.

It belongs to the CHIC family. In terms of processing, palmitoylation in the CHIC motif is required for membrane association.

The protein resides in the membrane. Its subcellular location is the golgi apparatus. In Mus musculus (Mouse), this protein is Cysteine-rich hydrophobic domain-containing protein 2 (Chic2).